The sequence spans 112 residues: Colipase (112 aa).

Positions 1 to 17 are cleaved as a signal peptide; it reads MEKVLALLLVTLTVAYA. Residues 18–22 constitute a propeptide, enterostatin, activation peptide; it reads VPDPR. Cystine bridges form between C34–C45, C40–C56, C44–C78, C66–C86, and C80–C104.

The protein belongs to the colipase family. In terms of assembly, forms a 1:1 stoichiometric complex with pancreatic lipase. Expressed by the pancreas.

The protein resides in the secreted. Colipase is a cofactor of pancreatic lipase. It allows the lipase to anchor itself to the lipid-water interface. Without colipase the enzyme is washed off by bile salts, which have an inhibitory effect on the lipase. Functionally, enterostatin has a biological activity as a satiety signal. This is Colipase (CLPS) from Sus scrofa (Pig).